We begin with the raw amino-acid sequence, 49 residues long: Small, acid-soluble spore protein O (49 aa).

The segment at 1–49 (MGKRKANHTISGMNAASAQGQGTGYNEEFANEPFTPAERQNNKKRKKNQ) is disordered. Residues 8 to 20 (HTISGMNAASAQG) show a composition bias toward polar residues.

It belongs to the SspO family.

The protein resides in the spore core. In Bacillus cereus (strain ATCC 14579 / DSM 31 / CCUG 7414 / JCM 2152 / NBRC 15305 / NCIMB 9373 / NCTC 2599 / NRRL B-3711), this protein is Small, acid-soluble spore protein O.